A 450-amino-acid chain; its full sequence is tRNA modification GTPase MnmE (450 aa).

(6S)-5-formyl-5,6,7,8-tetrahydrofolate contacts are provided by Arg-23, Glu-80, and Arg-123. Residues Gly-219 to Gly-372 form the TrmE-type G domain. Asn-229 contributes to the K(+) binding site. Residues Asn-229–Ser-234, Thr-248–Thr-254, Asp-273–Gly-276, and Ser-353–Arg-355 each bind GTP. Ser-233 is a Mg(2+) binding site. Thr-248, Ile-250, and Thr-253 together coordinate K(+). Thr-254 serves as a coordination point for Mg(2+). Lys-450 contributes to the (6S)-5-formyl-5,6,7,8-tetrahydrofolate binding site.

This sequence belongs to the TRAFAC class TrmE-Era-EngA-EngB-Septin-like GTPase superfamily. TrmE GTPase family. As to quaternary structure, homodimer. Heterotetramer of two MnmE and two MnmG subunits. It depends on K(+) as a cofactor.

It is found in the cytoplasm. In terms of biological role, exhibits a very high intrinsic GTPase hydrolysis rate. Involved in the addition of a carboxymethylaminomethyl (cmnm) group at the wobble position (U34) of certain tRNAs, forming tRNA-cmnm(5)s(2)U34. This chain is tRNA modification GTPase MnmE, found in Bordetella bronchiseptica (strain ATCC BAA-588 / NCTC 13252 / RB50) (Alcaligenes bronchisepticus).